The sequence spans 312 residues: Olfactory receptor 6C2 (312 aa).

Residues 1 to 23 (MKNHTVIRTFILLGLTGDPHLQV) lie on the Extracellular side of the membrane. N-linked (GlcNAc...) asparagine glycosylation is present at Asn3. The helical transmembrane segment at 24 to 44 (LLFIFLFLTYMLSVTGNLTII) threads the bilayer. Over 45-52 (TLTLVDHH) the chain is Cytoplasmic. The helical transmembrane segment at 53–73 (LKTPMYFFLRNFSFLEVSFTT) threads the bilayer. Residues 74-97 (VCIPRFLYNISMGDNTITYNACAS) are Extracellular-facing. N-linked (GlcNAc...) asparagine glycosylation occurs at Asn82. Cysteines 95 and 187 form a disulfide. A helical membrane pass occupies residues 98–118 (QIFFVILFGATEFFLLAAMSY). Over 119–137 (DRYVAICKPLHYVVIMNNR) the chain is Cytoplasmic. Residues 138–158 (VCTLLVLCCWVAGLMIIVPPL) form a helical membrane-spanning segment. The Extracellular segment spans residues 159-195 (SLGLQLEFCDSNAIDHFSCDAGPLLKISCSDTWVIEQ). A helical transmembrane segment spans residues 196–215 (MVILMAVFALIITLVCVILS). Topologically, residues 216-235 (YLYIVRTILKFPSVQQRKKA) are cytoplasmic. The chain crosses the membrane as a helical span at residues 236–256 (FSTCSSHMIVVSIAYGSCIFI). The Extracellular segment spans residues 257 to 269 (YIKPSAKDEVAIN). Residues 270 to 290 (KGVSVLTTSVAPLLNPFIYTL) form a helical membrane-spanning segment. Residues 291-312 (RNKQVKQAFSDSIKRIAFLSKK) are Cytoplasmic-facing.

It belongs to the G-protein coupled receptor 1 family.

Its subcellular location is the cell membrane. In terms of biological role, odorant receptor. This Homo sapiens (Human) protein is Olfactory receptor 6C2 (OR6C2).